Reading from the N-terminus, the 265-residue chain is Mlc titration factor A (265 aa).

Positions 111, 148, 152, and 211 each coordinate Zn(2+).

This sequence belongs to the MtfA family. In terms of assembly, interacts with Mlc. Zn(2+) serves as cofactor.

The protein resides in the cytoplasm. In terms of biological role, involved in the modulation of the activity of the glucose-phosphotransferase system (glucose-PTS). Interacts with the transcriptional repressor Mlc, preventing its interaction with DNA and leading to the modulation of expression of genes regulated by Mlc, including ptsG, which encodes the PTS system glucose-specific EIICB component. Its function is as follows. Shows zinc-dependent metallopeptidase activity. This chain is Mlc titration factor A, found in Salmonella gallinarum (strain 287/91 / NCTC 13346).